The following is a 104-amino-acid chain: uncharacterized protein (104 aa).

A disordered region spans residues Met-1–Glu-24.

This is an uncharacterized protein from Saccharomyces cerevisiae (strain ATCC 204508 / S288c) (Baker's yeast).